The primary structure comprises 240 residues: Zein-alpha A20 (240 aa).

The signal sequence occupies residues 1-21 (MATKIFSLLMLLALSACVANA).

It belongs to the zein family.

Its function is as follows. Zeins are major seed storage proteins. This Zea mays (Maize) protein is Zein-alpha A20.